The following is an 898-amino-acid chain: Putative aconitate hydratase, cytoplasmic (898 aa).

Residues Gln-90 and 209–211 (DSH) contribute to the substrate site. [4Fe-4S] cluster-binding residues include Cys-441, Cys-507, and Cys-510. Substrate is bound by residues Arg-540, Arg-545, Arg-703, and 784 to 785 (SR).

The protein belongs to the aconitase/IPM isomerase family. It depends on [4Fe-4S] cluster as a cofactor.

The protein resides in the cytoplasm. The enzyme catalyses citrate = D-threo-isocitrate. Its pathway is carbohydrate metabolism; glyoxylate and dicarboxylate metabolism. Functionally, catalyzes the isomerization of citrate to isocitrate via cis-aconitate. This Oryza sativa subsp. japonica (Rice) protein is Putative aconitate hydratase, cytoplasmic.